The following is a 339-amino-acid chain: Lymphocyte-specific protein 1 (339 aa).

The segment at 1 to 198 (MAEASSDPGA…SPPLSPTTKL (198 aa)) is disordered. A Phosphoserine modification is found at Ser-24. 2 stretches are compositionally biased toward basic and acidic residues: residues 32–43 (VHEQCQHERDRQ) and 51–61 (GGGHVPERPKQ). A Phosphoserine modification is found at Ser-111. The span at 117 to 140 (EDRPGLHAYEKEDSDEVHLEELSL) shows a compositional bias: basic and acidic residues. A Phosphothreonine modification is found at Thr-175. Residues Ser-177, Ser-188, Ser-189, and Ser-193 each carry the phosphoserine modification. Polar residues predominate over residues 185 to 196 (IEQSSPPLSPTT). Ser-252 is modified (phosphoserine; by MAPKAPK2). Positions 294 to 315 (KSLWEQKGGSKTSSTIKSTPSG) are disordered. Residues 300–315 (KGGSKTSSTIKSTPSG) show a composition bias toward low complexity. At Lys-327 the chain carries N6-acetyllysine.

In terms of assembly, binds actin. In terms of processing, phosphorylated by casein kinase II, protein kinase C and MAPKAPK2. Phosphorylation by PKC induces translocation from membrane to cytoplasm. Phosphorylation by MAPKAPK2 may regulate neutrophil chemotaxis. As to expression, activated T-lymphocytes.

Its subcellular location is the cell membrane. In terms of biological role, may play a role in mediating neutrophil activation and chemotaxis. The protein is Lymphocyte-specific protein 1 (LSP1) of Homo sapiens (Human).